Here is a 296-residue protein sequence, read N- to C-terminus: Elongation factor Ts (296 aa).

An involved in Mg(2+) ion dislocation from EF-Tu region spans residues 81–84 (TDFV).

It belongs to the EF-Ts family.

The protein localises to the cytoplasm. In terms of biological role, associates with the EF-Tu.GDP complex and induces the exchange of GDP to GTP. It remains bound to the aminoacyl-tRNA.EF-Tu.GTP complex up to the GTP hydrolysis stage on the ribosome. This is Elongation factor Ts from Ruthia magnifica subsp. Calyptogena magnifica.